A 227-amino-acid polypeptide reads, in one-letter code: 7-cyano-7-deazaguanine synthase (227 aa).

ATP is bound at residue 7 to 17; that stretch reads LSGGLDSSTIL. Positions 191, 199, 202, and 205 each coordinate Zn(2+).

The protein belongs to the QueC family. Zn(2+) is required as a cofactor.

The catalysed reaction is 7-carboxy-7-deazaguanine + NH4(+) + ATP = 7-cyano-7-deazaguanine + ADP + phosphate + H2O + H(+). Its pathway is purine metabolism; 7-cyano-7-deazaguanine biosynthesis. Its function is as follows. Catalyzes the ATP-dependent conversion of 7-carboxy-7-deazaguanine (CDG) to 7-cyano-7-deazaguanine (preQ(0)). This is 7-cyano-7-deazaguanine synthase from Trichormus variabilis (strain ATCC 29413 / PCC 7937) (Anabaena variabilis).